The following is a 68-amino-acid chain: UPF0434 protein H16_A0605 (68 aa).

It belongs to the UPF0434 family.

The chain is UPF0434 protein H16_A0605 from Cupriavidus necator (strain ATCC 17699 / DSM 428 / KCTC 22496 / NCIMB 10442 / H16 / Stanier 337) (Ralstonia eutropha).